A 163-amino-acid polypeptide reads, in one-letter code: SsrA-binding protein (163 aa).

Over residues 140-157 (RRGAIAERESKREMDRAL) the composition is skewed to basic and acidic residues. Positions 140–163 (RRGAIAERESKREMDRALARGRRR) are disordered.

It belongs to the SmpB family.

The protein resides in the cytoplasm. Functionally, required for rescue of stalled ribosomes mediated by trans-translation. Binds to transfer-messenger RNA (tmRNA), required for stable association of tmRNA with ribosomes. tmRNA and SmpB together mimic tRNA shape, replacing the anticodon stem-loop with SmpB. tmRNA is encoded by the ssrA gene; the 2 termini fold to resemble tRNA(Ala) and it encodes a 'tag peptide', a short internal open reading frame. During trans-translation Ala-aminoacylated tmRNA acts like a tRNA, entering the A-site of stalled ribosomes, displacing the stalled mRNA. The ribosome then switches to translate the ORF on the tmRNA; the nascent peptide is terminated with the 'tag peptide' encoded by the tmRNA and targeted for degradation. The ribosome is freed to recommence translation, which seems to be the essential function of trans-translation. This Anaeromyxobacter dehalogenans (strain 2CP-C) protein is SsrA-binding protein.